Consider the following 669-residue polypeptide: MKFFVLVLLLVLQFFSNKALSQSEEGEFGFNGYLYDNSGIAITNSKGLMKLTNSSEFSYGHVFYNSPVRFKNSPNGTVSSFSTTFVFAIVSNVNALDGHGLAFVISPTKGLPYSSSSQYLGLFNLTNNGDPSNHIVAVEFDTFQNQEFDDMDNNHVGIDINSLSSEKASTAGYYEDDDGTFKNIRLINQKPIQAWIEYDSSRRQLNVTIHPIHLPKPKIPLLSLTKDLSPYLFDSMYVGFTSATGRLRSSHYILGWTFKLNGTASNIDISRLPKLPRDSRSTSVKKILAISLSLTSLAILVFLTISYMLFLKRKKLMEVLEDWEVQFGPHRFAYKDLYIATKGFRNSELLGKGGFGKVYKGTLSTSNMDIAVKKVSHDSRQGMREFVAEIATIGRLRHPNLVRLLGYCRRKGELYLVYDCMPKGSLDKFLYHQPEQSLDWSQRFKIIKDVASGLCYLHHQWVQVIIHRDIKPANVLLDDSMNGKLGDFGLAKLCEHGFDPQTSNVAGTFGYISPELSRTGKASTSSDVFAFGILMLEITCGRRPVLPRASSPSEMVLTDWVLDCWEDDILQVVDERVKQDDKYLEEQVALVLKLGLFCSHPVAAVRPSMSSVIQFLDGVAQLPNNLFDIVKARENVGAIEGFGEAAESLAEPCSVATLTFTEPFVSHGR.

The N-terminal stretch at 1–21 (MKFFVLVLLLVLQFFSNKALS) is a signal peptide. Residues 22–286 (QSEEGEFGFN…RDSRSTSVKK (265 aa)) are Extracellular-facing. A legume-lectin like region spans residues 38-259 (SGIAITNSKG…SHYILGWTFK (222 aa)). N-linked (GlcNAc...) asparagine glycosylation is found at Asn53, Asn75, Asn124, Asn206, and Asn261. Residues 287-307 (ILAISLSLTSLAILVFLTISY) traverse the membrane as a helical segment. At 308-669 (MLFLKRKKLM…FTEPFVSHGR (362 aa)) the chain is on the cytoplasmic side. The Protein kinase domain occupies 344 to 603 (FRNSELLGKG…LGLFCSHPVA (260 aa)). ATP contacts are provided by residues 350 to 358 (LGKGGFGKV) and Lys373. Asp469 serves as the catalytic Proton acceptor.

The protein in the C-terminal section; belongs to the protein kinase superfamily. Ser/Thr protein kinase family. In the N-terminal section; belongs to the leguminous lectin family.

The protein localises to the cell membrane. It carries out the reaction L-seryl-[protein] + ATP = O-phospho-L-seryl-[protein] + ADP + H(+). It catalyses the reaction L-threonyl-[protein] + ATP = O-phospho-L-threonyl-[protein] + ADP + H(+). This is L-type lectin-domain containing receptor kinase V.9 (LECRK59) from Arabidopsis thaliana (Mouse-ear cress).